A 535-amino-acid polypeptide reads, in one-letter code: Probable deoxycholate-binding periplasmic protein YgiS (535 aa).

The first 20 residues, 1–20 (MYTRNLLWLVSLVSAAPLYA), serve as a signal peptide directing secretion.

Belongs to the bacterial solute-binding protein 5 family.

It localises to the periplasm. Probably part of a deoxycholate transport system. Its expression in the presence of deoxycholate in a ygiS deletion mutant increases intracellular deoxycholate levels and decreases cell growth; higher expression in the presence of deoxycholate inhibits cell growth completely. Bile acid detergents such as deoxycholate are important for host defense against bacterial growth in the gall bladder and duodenum. This chain is Probable deoxycholate-binding periplasmic protein YgiS (ygiS), found in Escherichia coli (strain K12).